Consider the following 1148-residue polypeptide: MASAPAEAETRQRLLRTVKKEVKQIMEEAVTRKFVHEDSSHIISFCAAVEACVLHGLRRRAAGFLRSNKIAALFMKVGKNFPPAEDLSRKVQDLEQLIESARNQIQGLQENVRKLPKLPNLSPLAIKHLWIRTALFEKVLDKIVHYLVENSSKYYEKEALLMDPVDGPILASLLVGPCALEYTKMKTADHFWTDPSADELVQRHRIHSSHVRQDSPTKRPALCIQKRHSSGSMDDRPSLSARDYVESLHQNSRATLLYGKNNVLVQPRDDMEAVPGYLSLHQTADVMTLKWTPNQLMNGSVGDLDYEKSVYWDYAMTIRLEEIVYLHCHQQVDSGGTVVLVSQDGIQRPPFRFPKGGHLLQFLSCLENGLLPHGQLDPPLWSQRGKGKVFPKLRKRSPQGSAESTSSDKDDDEATDYVFRIIYPGMQSEFVAPDFLGSTSSVSVGPAWMMVPAGRSMLVVARGSQWEPARWDTTLPTPSPKEQPPMPQDLMDVSVSNLPSLWQPSPRKSSCSSCSQSGSADGSSTNGCNHERAPLKLLCDNMKYQILSRAFYGWLAYCRHLSTVRTHLSALVNHMIVSPDLPCDAGQGLTARIWEQYLHDSTSYEEQELLRLIYYGGIQPEIRKAVWPFLLGHYQFGMTETERKEVDEQIHACYAQTMAEWLGCEAIVRQRERESHAAALAKCSSGASLDSHLHRMLHRDSTISNESSQSCSSGRQNIRLHSDSSSSTQVFESVDEVEQVEAEGRLEEKQPKIPNGNLVNGTCSPDSGHPSSHNFSSGLSEHSEPSLSTEDSVLDAQRNTPTVLRPRDGSVDDRQSSEATTSQDEAPREELAVQDSLESDLLANESMDEFMSITGSLDMALPEKDDVVMEGWRSSETEKHGQADSEDNLSEEPEMESLFPALASLAVTTSANEVSPVSSSGVTYSPELLDLYTVNLHRIEKDVQRCDRNYWYFTPANLEKLRNIMCSYIWQHIEIGYVQGMCDLLAPLLVILDDEALAFSCFTELMKRMNQNFPHGGAMDTHFANMRSLIQILDSELFELMHQNGDYTHFYFCYRWFLLDFKRELVYDDVFLVWETIWAAKHVSSAHYVLFIALALVEVYRDIILENNMDFTDIIKFFNEMAERHNTKQVLKLARDLVYKVQTLIENK.

The 155-residue stretch at 36–190 (HEDSSHIISF…EYTKMKTADH (155 aa)) folds into the RUN domain. The interval 256–297 (LLYGKNNVLVQPRDDMEAVPGYLSLHQTADVMTLKWTPNQLM) is important for interaction with RAB9A and RAB9B. The interval 301–350 (VGDLDYEKSVYWDYAMTIRLEEIVYLHCHQQVDSGGTVVLVSQDGIQRPP) is required for interaction with RAP family members. Disordered regions lie at residues 377 to 411 (DPPL…DKDD), 700 to 830 (DSTI…PREE), and 871 to 894 (GWRS…EEPE). The span at 385 to 397 (GKGKVFPKLRKRS) shows a compositional bias: basic residues. Residues 617–1081 (GIQPEIRKAV…LVWETIWAAK (465 aa)) form the Rab-GAP TBC domain. Over residues 702-716 (TISNESSQSCSSGRQ) the composition is skewed to polar residues. Residues 742–751 (AEGRLEEKQP) are compositionally biased toward basic and acidic residues. Over residues 757-802 (NLVNGTCSPDSGHPSSHNFSSGLSEHSEPSLSTEDSVLDAQRNTPT) the composition is skewed to polar residues. 2 stretches are compositionally biased toward basic and acidic residues: residues 805 to 816 (RPRDGSVDDRQS) and 871 to 883 (GWRS…HGQA). A compositionally biased stretch (acidic residues) spans 884–894 (DSEDNLSEEPE).

This sequence belongs to the RUTBC family. In terms of assembly, interacts with RAB9A (GTP-bound form) and RAB9B (GTP-bound form); has much lower affinity for GDP-bound RAB9A and RAB9B. Interacts with RAB3A, RAB4A, RAB5A, RAB8A, RAB11A, RAP1A, RAP1B, RAP2A and RAP2B. No interaction with RAB27A. In terms of tissue distribution, mainly expressed in brain, heart and testis.

The protein resides in the golgi apparatus. It is found in the trans-Golgi network. The protein localises to the cytoplasmic vesicle membrane. It localises to the cytoplasm. Its function is as follows. Interacts with numerous Rab family members, functioning as Rab effector for some, and as GTPase activator for others. Promotes GTP hydrolysis by RAB34 and RAB36. Probably functions as a GTPase effector with RAB9A and RAB9B; does not stimulate GTP hydrolysis with RAB9A and RAB9B. The sequence is that of Small G protein signaling modulator 1 (SGSM1) from Homo sapiens (Human).